The sequence spans 203 residues: N-(5'-phosphoribosyl)anthranilate isomerase (203 aa).

The protein belongs to the TrpF family.

The enzyme catalyses N-(5-phospho-beta-D-ribosyl)anthranilate = 1-(2-carboxyphenylamino)-1-deoxy-D-ribulose 5-phosphate. Its pathway is amino-acid biosynthesis; L-tryptophan biosynthesis; L-tryptophan from chorismate: step 3/5. This Geotalea uraniireducens (strain Rf4) (Geobacter uraniireducens) protein is N-(5'-phosphoribosyl)anthranilate isomerase.